The primary structure comprises 91 residues: Small ribosomal subunit protein bS18 (91 aa).

The protein belongs to the bacterial ribosomal protein bS18 family. As to quaternary structure, part of the 30S ribosomal subunit. Forms a tight heterodimer with protein bS6.

Binds as a heterodimer with protein bS6 to the central domain of the 16S rRNA, where it helps stabilize the platform of the 30S subunit. This chain is Small ribosomal subunit protein bS18, found in Burkholderia ambifaria (strain MC40-6).